The primary structure comprises 465 residues: Adenosylhomocysteinase (465 aa).

Substrate-binding residues include T56, D131, and E191. 192 to 194 (TTT) is an NAD(+) binding site. K221 and D225 together coordinate substrate. NAD(+)-binding positions include N226, 255-260 (GYGDVG), E278, N313, 334-336 (IGH), and N379.

The protein belongs to the adenosylhomocysteinase family. The cofactor is NAD(+).

It is found in the cytoplasm. It carries out the reaction S-adenosyl-L-homocysteine + H2O = L-homocysteine + adenosine. It participates in amino-acid biosynthesis; L-homocysteine biosynthesis; L-homocysteine from S-adenosyl-L-homocysteine: step 1/1. Its function is as follows. May play a key role in the regulation of the intracellular concentration of adenosylhomocysteine. This Bartonella henselae (strain ATCC 49882 / DSM 28221 / CCUG 30454 / Houston 1) (Rochalimaea henselae) protein is Adenosylhomocysteinase.